The sequence spans 284 residues: Succinate dehydrogenase [ubiquinone] iron-sulfur subunit, mitochondrial (284 aa).

The transit peptide at 1–26 (MAAVVFSLRRSGPVFRLPGVLQVCRG) directs the protein to the mitochondrion. One can recognise a 2Fe-2S ferredoxin-type domain in the interval 44-137 (KKFAIYRWDP…VSKIYPLPHM (94 aa)). [2Fe-2S] cluster contacts are provided by C97, C102, C105, and C117. The region spanning 180–210 (DRDKLDGLYECILCACCSTSCPSYWWNADKY) is the 4Fe-4S ferredoxin-type domain. The [4Fe-4S] cluster site is built by C190, C193, and C196. Residue C200 participates in [3Fe-4S] cluster binding. Residue W205 coordinates a ubiquinone. Residues C247 and C253 each coordinate [3Fe-4S] cluster. C257 lines the [4Fe-4S] cluster pocket.

This sequence belongs to the succinate dehydrogenase/fumarate reductase iron-sulfur protein family. Component of complex II composed of four subunits: the flavoprotein (FP) sdha, iron-sulfur protein (IP) sdhb, and a cytochrome b composed of sdhc and sdhd. [2Fe-2S] cluster is required as a cofactor. The cofactor is [3Fe-4S] cluster. Requires [4Fe-4S] cluster as cofactor.

It is found in the mitochondrion inner membrane. The enzyme catalyses a quinone + succinate = fumarate + a quinol. It carries out the reaction (R)-malate + a quinone = enol-oxaloacetate + a quinol. It catalyses the reaction (S)-malate + a quinone = enol-oxaloacetate + a quinol. It participates in carbohydrate metabolism; tricarboxylic acid cycle; fumarate from succinate (eukaryal route): step 1/1. With respect to regulation, enol-oxaloacetate inhibits the succinate dehydrogenase activity. Functionally, iron-sulfur protein (IP) subunit of the succinate dehydrogenase complex (mitochondrial respiratory chain complex II), responsible for transferring electrons from succinate to ubiquinone (coenzyme Q). SDH also oxidizes malate to the non-canonical enol form of oxaloacetate, enol-oxaloacetate. Enol-oxaloacetate, which is a potent inhibitor of the succinate dehydrogenase activity, is further isomerized into keto-oxaloacetate. The protein is Succinate dehydrogenase [ubiquinone] iron-sulfur subunit, mitochondrial (sdhb) of Xenopus tropicalis (Western clawed frog).